Consider the following 316-residue polypeptide: Lipoyl synthase (316 aa).

Basic and acidic residues predominate over residues 1–19 (MRDLKIPEQRHPEKAHRPD). The tract at residues 1–31 (MRDLKIPEQRHPEKAHRPDNAQPKKPSWIRV) is disordered. Positions 55, 60, 66, 81, 85, 88, and 295 each coordinate [4Fe-4S] cluster. The region spanning 67-284 (WSQGHATMMI…EKAAYGKGFL (218 aa)) is the Radical SAM core domain.

The protein belongs to the radical SAM superfamily. Lipoyl synthase family. The cofactor is [4Fe-4S] cluster.

The protein localises to the cytoplasm. It catalyses the reaction [[Fe-S] cluster scaffold protein carrying a second [4Fe-4S](2+) cluster] + N(6)-octanoyl-L-lysyl-[protein] + 2 oxidized [2Fe-2S]-[ferredoxin] + 2 S-adenosyl-L-methionine + 4 H(+) = [[Fe-S] cluster scaffold protein] + N(6)-[(R)-dihydrolipoyl]-L-lysyl-[protein] + 4 Fe(3+) + 2 hydrogen sulfide + 2 5'-deoxyadenosine + 2 L-methionine + 2 reduced [2Fe-2S]-[ferredoxin]. It participates in protein modification; protein lipoylation via endogenous pathway; protein N(6)-(lipoyl)lysine from octanoyl-[acyl-carrier-protein]: step 2/2. Its function is as follows. Catalyzes the radical-mediated insertion of two sulfur atoms into the C-6 and C-8 positions of the octanoyl moiety bound to the lipoyl domains of lipoate-dependent enzymes, thereby converting the octanoylated domains into lipoylated derivatives. In Ruegeria sp. (strain TM1040) (Silicibacter sp.), this protein is Lipoyl synthase.